A 225-amino-acid polypeptide reads, in one-letter code: MIGWLQGQKVEAWQQGTRQGVVLACAGVGYEVQIAPRHLSEMEHGQNTFILWIHQVQRDDGSSLFGFPERRERDMFRTLIGVSGVGPQMALALLEECQTGELVEAIVQGDLRKLCQAQGVGKRTAERLAVELRTKLAEFSCRDPGMSLVDNGVIDSHQLKDSSLHELQITLGGLGYEDLEIRRAIRAVASGAAIGASDMPESVPSIDDTDAWLRASLRWLSQEAA.

The interval 1 to 68 is domain I; the sequence is MIGWLQGQKV…DDGSSLFGFP (68 aa). Residues 69-147 form a domain II region; that stretch reads ERRERDMFRT…EFSCRDPGMS (79 aa). The interval 148-158 is flexible linker; that stretch reads LVDNGVIDSHQ. A domain III region spans residues 159-225; sequence LKDSSLHELQ…SLRWLSQEAA (67 aa).

It belongs to the RuvA family. Homotetramer. Forms an RuvA(8)-RuvB(12)-Holliday junction (HJ) complex. HJ DNA is sandwiched between 2 RuvA tetramers; dsDNA enters through RuvA and exits via RuvB. An RuvB hexamer assembles on each DNA strand where it exits the tetramer. Each RuvB hexamer is contacted by two RuvA subunits (via domain III) on 2 adjacent RuvB subunits; this complex drives branch migration. In the full resolvosome a probable DNA-RuvA(4)-RuvB(12)-RuvC(2) complex forms which resolves the HJ.

The protein resides in the cytoplasm. Functionally, the RuvA-RuvB-RuvC complex processes Holliday junction (HJ) DNA during genetic recombination and DNA repair, while the RuvA-RuvB complex plays an important role in the rescue of blocked DNA replication forks via replication fork reversal (RFR). RuvA specifically binds to HJ cruciform DNA, conferring on it an open structure. The RuvB hexamer acts as an ATP-dependent pump, pulling dsDNA into and through the RuvAB complex. HJ branch migration allows RuvC to scan DNA until it finds its consensus sequence, where it cleaves and resolves the cruciform DNA. The sequence is that of Holliday junction branch migration complex subunit RuvA from Prochlorococcus marinus (strain MIT 9313).